Reading from the N-terminus, the 109-residue chain is Cell division protein ZapA (109 aa).

The stretch at 71–99 (KTRDYASNMEQRIRMLQQTIEQALLEQGR) forms a coiled coil.

The protein belongs to the ZapA family. Type 1 subfamily. Homodimer. Interacts with FtsZ.

The protein resides in the cytoplasm. In terms of biological role, activator of cell division through the inhibition of FtsZ GTPase activity, therefore promoting FtsZ assembly into bundles of protofilaments necessary for the formation of the division Z ring. It is recruited early at mid-cell but it is not essential for cell division. This chain is Cell division protein ZapA, found in Serratia proteamaculans (strain 568).